A 414-amino-acid chain; its full sequence is Probable elongation factor 1-gamma 1 (414 aa).

Residues 1 to 82 (MALVLHTYKG…YVSRLNGDNS (82 aa)) form the GST N-terminal domain. The GST C-terminal domain maps to 87–215 (SLIEYAQIEQ…VKQTEAVPPI (129 aa)). Residues 214-224 (PIASKKAAQPA) show a composition bias toward low complexity. The disordered stretch occupies residues 214–260 (PIASKKAAQPAKPKEEPKKKEAPVAEAPKLAEEEEAPKPKAKNPLDL). Residues 225-236 (KPKEEPKKKEAP) are compositionally biased toward basic and acidic residues. The EF-1-gamma C-terminal domain maps to 254-414 (AKNPLDLLPP…EALLDAKCFK (161 aa)).

In terms of assembly, EF-1 is composed of four subunits: alpha, beta, delta, and gamma.

Functionally, probably plays a role in anchoring the complex to other cellular components. The protein is Probable elongation factor 1-gamma 1 of Arabidopsis thaliana (Mouse-ear cress).